A 271-amino-acid polypeptide reads, in one-letter code: Ribosomal RNA small subunit methyltransferase A (271 aa).

The S-adenosyl-L-methionine site is built by histidine 11, leucine 13, glycine 38, glutamate 59, aspartate 84, and asparagine 109.

It belongs to the class I-like SAM-binding methyltransferase superfamily. rRNA adenine N(6)-methyltransferase family. RsmA subfamily.

Its subcellular location is the cytoplasm. It carries out the reaction adenosine(1518)/adenosine(1519) in 16S rRNA + 4 S-adenosyl-L-methionine = N(6)-dimethyladenosine(1518)/N(6)-dimethyladenosine(1519) in 16S rRNA + 4 S-adenosyl-L-homocysteine + 4 H(+). Specifically dimethylates two adjacent adenosines (A1518 and A1519) in the loop of a conserved hairpin near the 3'-end of 16S rRNA in the 30S particle. May play a critical role in biogenesis of 30S subunits. The sequence is that of Ribosomal RNA small subunit methyltransferase A from Nostoc sp. (strain PCC 7120 / SAG 25.82 / UTEX 2576).